We begin with the raw amino-acid sequence, 148 residues long: 3-dehydroquinate dehydratase (148 aa).

Tyr-23 functions as the Proton acceptor in the catalytic mechanism. Substrate contacts are provided by Asn-75, His-81, and Asp-88. His-101 serves as the catalytic Proton donor. Residues 102-103 (LS) and Arg-112 each bind substrate.

Belongs to the type-II 3-dehydroquinase family. Homododecamer.

It carries out the reaction 3-dehydroquinate = 3-dehydroshikimate + H2O. It functions in the pathway metabolic intermediate biosynthesis; chorismate biosynthesis; chorismate from D-erythrose 4-phosphate and phosphoenolpyruvate: step 3/7. Functionally, catalyzes a trans-dehydration via an enolate intermediate. The protein is 3-dehydroquinate dehydratase of Cellvibrio japonicus (strain Ueda107) (Pseudomonas fluorescens subsp. cellulosa).